The sequence spans 133 residues: Snaclec echicetin subunit alpha (133 aa).

Disulfide bonds link cysteine 4–cysteine 15, cysteine 31–cysteine 127, and cysteine 102–cysteine 119. Residues 11–128 form the C-type lectin domain; the sequence is YEGHCYQLFR…CEFKFPFVCK (118 aa).

Belongs to the snaclec family. Heterodimer of subunits alpha and beta; disulfide-linked. Forms an active complex with the pentameric immunoglobuline Mkappa (IgMkappa). As to expression, expressed by the venom gland.

It localises to the secreted. Echicetin itself inhibits aggregation of washed platelets induced by vWF, thrombin or alboaggregin-A. However, when complexed with the pentameric plasma immunoglobulin Mkappa (IgMkappa), echicetin binds specifically to GPIb and activates platelets. This is caused by P-selectin expression and activation of alpha-IIb/beta-3 as well as tyrosine phosphorylation of several signal transduction molecules, including p53/56(LYN), p64, p72(SYK), p70 to p90, and p120. In vivo, it induces thrombocytopenia when injected into mice, probably accounting of activation of platelets rather than inhibition. In Echis carinatus sochureki (Saw-scaled viper), this protein is Snaclec echicetin subunit alpha.